The sequence spans 493 residues: Beta-hexosaminidase Amuc_2018 (493 aa).

Positions 1–21 are cleaved as a signal peptide; it reads MARPLPILGGILLSFSPPAEA. R122 is a substrate binding site. Catalysis depends on charge relay system residues D151 and H214. Zn(2+)-binding residues include C227 and C247. Position 278 (D278) interacts with substrate. The active-site Charge relay system is E279. Positions 288 and 291 each coordinate Zn(2+). Substrate-binding positions include W345, 373 to 375, and 421 to 423; these read YLD and WAE.

It belongs to the glycosyl hydrolase 20 family.

It catalyses the reaction Hydrolysis of terminal non-reducing N-acetyl-D-hexosamine residues in N-acetyl-beta-D-hexosaminides.. Its activity is regulated as follows. Significantly inhibited by the addition of sodium dodecyl sulfate (SDS), but not by EDTA, urea, 2-mercaptoethanol or Triton X-100. Strongly inhibited by Cu2(+) ions, in case of which the activity is decreased by 70%. No significant inhibition with Al(3+), Fe(3+), Ca(2+), Cd(2+), Mg(2+), Mn(2+), Ni(2+) and Zn(2+) ions. Strongly inhibited by PugNAc (O-(2-acetamido-2-deoxy-D-glucopyranosylideneamino) N-phenylcarbamate) in the sub-micromolar concentration range. PugNAc at a concentration of 0.5 mM decreases the activity by 50% and the addition of 1 mM PugNAc fully inhibits the enzyme. No significant reduction in the activity by alkylation using N-ethylmaleimide or 2-iodoacetamide. Its function is as follows. Hydrolyzes terminal GlcNAc residues from terminally unbranched N-glycans and from chitobiose. Hydrolyzes beta-1,6-linked N-acetylglucosamine and beta-1,4-linked N-acetylgalactosamine from pNP-alpha-GalNAc[beta1,3Gal]beta1,6GlcNAc and pNP-beta-GlcNAc-beta1,4-GalNAc substrates, respectively, as well as beta-1,2-linked N-acetylglucosamine units from the non-reducing end of N-glycans. Hydrolyzes GlcNAc residues linked to alpha1,3- or alpha1,6-mannose branch, but has low activity on substrates with more than one GlcNAc residue on one of the mannose branches. Releases terminal GlcNAc moieties from the N-glycopeptide Gly-Glu-Asn-(GlcNAc2Man3GlcNAc2)-Arg with high efficiency. Has moderate hydrolytic activity on the chitobiose moiety of N-glycopeptide substrate Gly-Glu-Asn-(GlcNAc2)-Arg. Does not hydrolyze GlcNAc residues from N-glycan structures bearing a bisecting GlcNAc moiety (beta1,4-linked GlcNAc to the beta1,4-linked core mannose). Potentially capable of cleaving the specific glycoside linkages in the process of mucin degradation in human intestinal tract. Hydrolyzes synthetic substrate pNP-beta-GlcNAc with high activity and pNP-beta-GalNAc to a lesser extent. Does not hydrolyze pNP-beta-glucose, pNP-beta-galactose, pNP-alpha-glucose, pNP-alpha-galactose, pNP-alpha-GlcNAc or pNP-alpha-fucose. The polypeptide is Beta-hexosaminidase Amuc_2018 (Akkermansia muciniphila (strain ATCC BAA-835 / DSM 22959 / JCM 33894 / BCRC 81048 / CCUG 64013 / CIP 107961 / Muc)).